A 640-amino-acid polypeptide reads, in one-letter code: 1-deoxy-D-xylulose-5-phosphate synthase (640 aa).

Residues His-79 and 120–122 (GHS) contribute to the thiamine diphosphate site. Asp-151 contributes to the Mg(2+) binding site. Residues 152–153 (GG), Asn-180, Tyr-288, and Glu-372 contribute to the thiamine diphosphate site. Asn-180 contributes to the Mg(2+) binding site.

This sequence belongs to the transketolase family. DXPS subfamily. In terms of assembly, homodimer. Requires Mg(2+) as cofactor. It depends on thiamine diphosphate as a cofactor.

It catalyses the reaction D-glyceraldehyde 3-phosphate + pyruvate + H(+) = 1-deoxy-D-xylulose 5-phosphate + CO2. It functions in the pathway metabolic intermediate biosynthesis; 1-deoxy-D-xylulose 5-phosphate biosynthesis; 1-deoxy-D-xylulose 5-phosphate from D-glyceraldehyde 3-phosphate and pyruvate: step 1/1. In terms of biological role, catalyzes the acyloin condensation reaction between C atoms 2 and 3 of pyruvate and glyceraldehyde 3-phosphate to yield 1-deoxy-D-xylulose-5-phosphate (DXP). The polypeptide is 1-deoxy-D-xylulose-5-phosphate synthase (Nitrosococcus oceani (strain ATCC 19707 / BCRC 17464 / JCM 30415 / NCIMB 11848 / C-107)).